Reading from the N-terminus, the 185-residue chain is Class I hydrophobin SC6 (185 aa).

An N-terminal signal peptide occupies residues 1–17; the sequence is MVSRVLALISVAMLVGA. The segment at 70–104 is disordered; that stretch reads HIPEVTGSSTEEATSSSTWSGASSKPTDSAPTQCN. The segment covering 75–93 has biased composition (low complexity); sequence TGSSTEEATSSSTWSGASS. Residues 94-104 show a composition bias toward polar residues; the sequence is KPTDSAPTQCN. Cystine bridges form between C103-C164, C110-C158, C111-C144, and C165-C178.

The protein belongs to the fungal hydrophobin family. In terms of assembly, self-assembles to form functional amyloid fibrils called rodlets. Self-assembly into fibrillar rodlets occurs spontaneously at hydrophobic:hydrophilic interfaces and the rodlets further associate laterally to form amphipathic monolayers.

It is found in the secreted. The protein localises to the cell wall. In terms of biological role, aerial growth, conidiation, and dispersal of filamentous fungi in the environment rely upon a capability of their secreting small amphipathic proteins called hydrophobins (HPBs) with low sequence identity. Class I can self-assemble into an outermost layer of rodlet bundles on aerial cell surfaces, conferring cellular hydrophobicity that supports fungal growth, development and dispersal; whereas Class II form highly ordered films at water-air interfaces through intermolecular interactions but contribute nothing to the rodlet structure. SC6 is a dikaryon-specific class I hydrophobin that contributes to the formation of aerial hyphae and fruiting bodies. In Schizophyllum commune (Split gill fungus), this protein is Class I hydrophobin SC6.